Here is a 247-residue protein sequence, read N- to C-terminus: Transmembrane protein 69 (247 aa).

5 consecutive transmembrane segments (helical) span residues 97-117 (ALCV…VMLM), 122-142 (IPIL…FLGG), 159-179 (YLNL…FLIS), 185-205 (AIVT…FLLP), and 216-236 (IVVT…KSSF).

The protein resides in the membrane. The sequence is that of Transmembrane protein 69 (TMEM69) from Homo sapiens (Human).